The sequence spans 197 residues: Pyridoxal 5'-phosphate synthase subunit PdxT (197 aa).

52-54 serves as a coordination point for L-glutamine; sequence GES. Cys83 serves as the catalytic Nucleophile. L-glutamine contacts are provided by residues Arg115 and 142–143; that span reads IR. Residues His178 and Glu180 each act as charge relay system in the active site.

The protein belongs to the glutaminase PdxT/SNO family. In terms of assembly, in the presence of PdxS, forms a dodecamer of heterodimers. Only shows activity in the heterodimer.

The catalysed reaction is aldehydo-D-ribose 5-phosphate + D-glyceraldehyde 3-phosphate + L-glutamine = pyridoxal 5'-phosphate + L-glutamate + phosphate + 3 H2O + H(+). It carries out the reaction L-glutamine + H2O = L-glutamate + NH4(+). It functions in the pathway cofactor biosynthesis; pyridoxal 5'-phosphate biosynthesis. Catalyzes the hydrolysis of glutamine to glutamate and ammonia as part of the biosynthesis of pyridoxal 5'-phosphate. The resulting ammonia molecule is channeled to the active site of PdxS. This chain is Pyridoxal 5'-phosphate synthase subunit PdxT, found in Korarchaeum cryptofilum (strain OPF8).